Here is a 259-residue protein sequence, read N- to C-terminus: Ribonuclease PH (259 aa).

Phosphate-binding positions include R88 and 126–128 (GTR).

Belongs to the RNase PH family. Homohexameric ring arranged as a trimer of dimers.

The catalysed reaction is tRNA(n+1) + phosphate = tRNA(n) + a ribonucleoside 5'-diphosphate. Functionally, phosphorolytic 3'-5' exoribonuclease that plays an important role in tRNA 3'-end maturation. Removes nucleotide residues following the 3'-CCA terminus of tRNAs; can also add nucleotides to the ends of RNA molecules by using nucleoside diphosphates as substrates, but this may not be physiologically important. Probably plays a role in initiation of 16S rRNA degradation (leading to ribosome degradation) during starvation. The chain is Ribonuclease PH from Mycobacterium leprae (strain Br4923).